The following is a 1032-amino-acid chain: MEEQVANAIEIASNPSADPALKTQAFDFVNQLRSDPSGWQVCLSLFTQTPQRSGIVRHVALEVVNSAAQGGLIDLQALAYVKDGLLAYLRQVYGQDAGASDPPNIQNKIAQTITFLFSALYASGWESFFDDLLGLTQKSPSSTTRDNASGIIFYLRVINSIHDEIGDVLVSRSRNEQDKANALKDLIRQRDMQKITSSWQQILSEWRDGNDVIVEMCLKAVGSWVSWIDIGLVVNQTMLDLLFQQLGRAQKEDLRQGEEKVRDAAVDVFTEIIGKKMKPEDKIDMIIFLNLDTIVSQLSNSPPLHGNRFTFKYDTDLAETVAKLVNITVIDIVRALEQEGVSTECKEKANGLLQAFLPHILRYFSDEYDEVCSTVIPCVSDLLTYLRRIAKVNPALASQHSSILLPILKAIIAKMRYDETSSWGEEDEQTDEAEFQELRKRLGILQQMIASINEQLYMEVVSEMVATTFENLRQSGSQMDWRDLDLALHEMFLFGDLAVKAGSLYTKGNPNNQAAERLIEMMLRMVESDIRSFTHPATQLQYTEICVRYSSFFHHHTHLIPGVLENFLQLVHHPIKKVKTRSWYLFQRLVKQLRQYVGNVAQTVVEALGDLLVIRAELPSEVSEGDEMSSEDHELADAIFNSQLYLFEAVGIICSTPTISPDKQVLYVQAVLNPIFLDMEKNLEAAKSQDERAILQIHHDIMALGTLARGFSDWMPGTNTPATLPAPEVSAAFNQVAEATLVALESLKSSFNVRTAARFAFSRLIGVLGSRILPQLPRWIDGLLTQTSSRDEMALFLRLLDQVIFGFKGEIFSILDTLLTPFLQRVFSGIADPTTGTDDEIQLAELKREYLNFLLAVLNNDLGAVIISERNQPIFETVISTIEHFSKDIDDFTTAKMAFSVLSKMSSSWGGPDVIAEASNGTPPSQAPLPGFGQFMITRFSPLCWALPSTPSFNSKDAQAKQVLAEAGGLQRTIYAKTGMEYLTYLRDRELPGMGMGGELIEEFVGALSRLDLKGFRQFFPVCLSNFHILSI.

The protein belongs to the exportin family.

The protein localises to the nucleus. It localises to the cytoplasm. In terms of biological role, tRNA nucleus export receptor which facilitates tRNA translocation across the nuclear pore complex. Involved in pre-tRNA splicing, probably by affecting the interaction of pre-tRNA with splicing endonuclease. The polypeptide is Exportin-T (los1) (Aspergillus fumigatus (strain ATCC MYA-4609 / CBS 101355 / FGSC A1100 / Af293) (Neosartorya fumigata)).